The following is a 220-amino-acid chain: MRLILLGAPGAGKGTQANFIKEKFGIPQISTGDMLRAAVKAGTPLGVEAKGYMDAGKLVPDALIIGLVKERLKESDCANGYLFDGFPRTIAQADAMKEAGVAIDYVLEIDVPFSEIIERMSGRRTHPASGRTYHVKFNPPKVEGHDDVTGEPLIQRDDDKEETVKKRLEVYEAQTKPLITYYGDWAQRGEENGLKAPQYRKISGLGTVDEIRERAFDALK.

Glycine 10–threonine 15 contributes to the ATP binding site. The NMP stretch occupies residues serine 30–valine 59. AMP is bound by residues threonine 31, arginine 36, lysine 57–valine 59, glycine 85–arginine 88, and glutamine 92. Positions glycine 122–aspartate 159 are LID. ATP is bound by residues arginine 123 and threonine 132–tyrosine 133. AMP contacts are provided by arginine 156 and arginine 167. Glycine 206 contacts ATP.

Belongs to the adenylate kinase family. In terms of assembly, monomer.

The protein resides in the cytoplasm. The enzyme catalyses AMP + ATP = 2 ADP. It functions in the pathway purine metabolism; AMP biosynthesis via salvage pathway; AMP from ADP: step 1/1. Catalyzes the reversible transfer of the terminal phosphate group between ATP and AMP. Plays an important role in cellular energy homeostasis and in adenine nucleotide metabolism. The protein is Adenylate kinase of Burkholderia cenocepacia (strain HI2424).